The sequence spans 692 residues: Elongation factor G (692 aa).

The tr-type G domain maps to 8–282; that stretch reads ENTRNIGIMA…AVIDYLPSPL (275 aa). GTP contacts are provided by residues 17 to 24, 81 to 85, and 135 to 138; these read AHIDAGKT, DTPGH, and NKMD.

This sequence belongs to the TRAFAC class translation factor GTPase superfamily. Classic translation factor GTPase family. EF-G/EF-2 subfamily.

It localises to the cytoplasm. Catalyzes the GTP-dependent ribosomal translocation step during translation elongation. During this step, the ribosome changes from the pre-translocational (PRE) to the post-translocational (POST) state as the newly formed A-site-bound peptidyl-tRNA and P-site-bound deacylated tRNA move to the P and E sites, respectively. Catalyzes the coordinated movement of the two tRNA molecules, the mRNA and conformational changes in the ribosome. The protein is Elongation factor G of Bacillus cereus (strain ATCC 10987 / NRS 248).